Here is a 61-residue protein sequence, read N- to C-terminus: Small ribosomal subunit protein uS14 (61 aa).

The span at 1–14 (MAKTSQKVRNHRPA) shows a compositional bias: basic residues. The tract at residues 1–20 (MAKTSQKVRNHRPAKFSSRE) is disordered. Zn(2+)-binding residues include Cys-24, Cys-27, Cys-40, and Cys-43.

It belongs to the universal ribosomal protein uS14 family. Zinc-binding uS14 subfamily. As to quaternary structure, part of the 30S ribosomal subunit. Contacts proteins S3 and S10. The cofactor is Zn(2+).

Its function is as follows. Binds 16S rRNA, required for the assembly of 30S particles and may also be responsible for determining the conformation of the 16S rRNA at the A site. In Lactobacillus delbrueckii subsp. bulgaricus (strain ATCC 11842 / DSM 20081 / BCRC 10696 / JCM 1002 / NBRC 13953 / NCIMB 11778 / NCTC 12712 / WDCM 00102 / Lb 14), this protein is Small ribosomal subunit protein uS14.